A 265-amino-acid polypeptide reads, in one-letter code: Nitrogenase iron protein 2 (265 aa).

An ATP-binding site is contributed by 8 to 15 (GKGGIGKS). Cysteine 91 lines the [4Fe-4S] cluster pocket. Position 94 is an ADP-ribosylarginine; by dinitrogenase reductase ADP-ribosyltransferase (arginine 94). Cysteine 126 serves as a coordination point for [4Fe-4S] cluster.

This sequence belongs to the NifH/BchL/ChlL family. Homodimer. [4Fe-4S] cluster serves as cofactor. Post-translationally, the reversible ADP-ribosylation of Arg-94 inactivates the nitrogenase reductase and regulates nitrogenase activity.

It carries out the reaction N2 + 8 reduced [2Fe-2S]-[ferredoxin] + 16 ATP + 16 H2O = H2 + 8 oxidized [2Fe-2S]-[ferredoxin] + 2 NH4(+) + 16 ADP + 16 phosphate + 6 H(+). Its function is as follows. The key enzymatic reactions in nitrogen fixation are catalyzed by the nitrogenase complex, which has 2 components: the iron protein and the molybdenum-iron protein. This Methanothermobacter thermautotrophicus (strain ATCC 29096 / DSM 1053 / JCM 10044 / NBRC 100330 / Delta H) (Methanobacterium thermoautotrophicum) protein is Nitrogenase iron protein 2 (nifH2).